A 242-amino-acid chain; its full sequence is Enolase-phosphatase E1 (242 aa).

The protein belongs to the HAD-like hydrolase superfamily. MasA/MtnC family. As to quaternary structure, monomer. Mg(2+) serves as cofactor.

The enzyme catalyses 5-methylsulfanyl-2,3-dioxopentyl phosphate + H2O = 1,2-dihydroxy-5-(methylsulfanyl)pent-1-en-3-one + phosphate. Its pathway is amino-acid biosynthesis; L-methionine biosynthesis via salvage pathway; L-methionine from S-methyl-5-thio-alpha-D-ribose 1-phosphate: step 3/6. It functions in the pathway amino-acid biosynthesis; L-methionine biosynthesis via salvage pathway; L-methionine from S-methyl-5-thio-alpha-D-ribose 1-phosphate: step 4/6. Bifunctional enzyme that catalyzes the enolization of 2,3-diketo-5-methylthiopentyl-1-phosphate (DK-MTP-1-P) into the intermediate 2-hydroxy-3-keto-5-methylthiopentenyl-1-phosphate (HK-MTPenyl-1-P), which is then dephosphorylated to form the acireductone 1,2-dihydroxy-3-keto-5-methylthiopentene (DHK-MTPene). This is Enolase-phosphatase E1 from Synechococcus sp. (strain WH7803).